A 513-amino-acid chain; its full sequence is Sterol 14-alpha demethylase (513 aa).

The helical transmembrane segment at 8-28 threads the bilayer; that stretch reads AYALLAFVAIMALNVTYQFLF. Asparagine 32 and asparagine 332 each carry an N-linked (GlcNAc...) asparagine glycan. Cysteine 453 lines the heme pocket.

It belongs to the cytochrome P450 family. Heme serves as cofactor.

The protein localises to the endoplasmic reticulum membrane. The catalysed reaction is a 14alpha-methyl steroid + 3 reduced [NADPH--hemoprotein reductase] + 3 O2 = a Delta(14) steroid + formate + 3 oxidized [NADPH--hemoprotein reductase] + 4 H2O + 4 H(+). The enzyme catalyses a 14alpha-methyl steroid + reduced [NADPH--hemoprotein reductase] + O2 = a 14alpha-hydroxymethyl steroid + oxidized [NADPH--hemoprotein reductase] + H2O + H(+). It carries out the reaction a 14alpha-hydroxymethyl steroid + reduced [NADPH--hemoprotein reductase] + O2 = a 14alpha-formyl steroid + oxidized [NADPH--hemoprotein reductase] + 2 H2O + H(+). It catalyses the reaction a 14alpha-formyl steroid + reduced [NADPH--hemoprotein reductase] + O2 = a Delta(14) steroid + formate + oxidized [NADPH--hemoprotein reductase] + H2O + 2 H(+). The catalysed reaction is lanosterol + 3 reduced [NADPH--hemoprotein reductase] + 3 O2 = 4,4-dimethyl-5alpha-cholesta-8,14,24-trien-3beta-ol + formate + 3 oxidized [NADPH--hemoprotein reductase] + 4 H2O + 4 H(+). The enzyme catalyses lanosterol + reduced [NADPH--hemoprotein reductase] + O2 = 32-hydroxylanosterol + oxidized [NADPH--hemoprotein reductase] + H2O + H(+). It carries out the reaction 32-hydroxylanosterol + reduced [NADPH--hemoprotein reductase] + O2 = 32-oxolanosterol + oxidized [NADPH--hemoprotein reductase] + 2 H2O + H(+). It catalyses the reaction 32-oxolanosterol + reduced [NADPH--hemoprotein reductase] + O2 = 4,4-dimethyl-5alpha-cholesta-8,14,24-trien-3beta-ol + formate + oxidized [NADPH--hemoprotein reductase] + H2O + 2 H(+). The catalysed reaction is eburicol + 3 reduced [NADPH--hemoprotein reductase] + 3 O2 = 14-demethyleburicol + formate + 3 oxidized [NADPH--hemoprotein reductase] + 4 H2O + 4 H(+). The enzyme catalyses eburicol + reduced [NADPH--hemoprotein reductase] + O2 = 32-hydroxyeburicol + oxidized [NADPH--hemoprotein reductase] + H2O + H(+). It carries out the reaction 32-hydroxyeburicol + reduced [NADPH--hemoprotein reductase] + O2 = 32-oxoeburicol + oxidized [NADPH--hemoprotein reductase] + 2 H2O + H(+). It catalyses the reaction 32-oxoeburicol + reduced [NADPH--hemoprotein reductase] + O2 = 14-demethyleburicol + formate + oxidized [NADPH--hemoprotein reductase] + H2O + 2 H(+). It functions in the pathway steroid biosynthesis; sterol biosynthesis. Sterol 14alpha-demethylase, encoded by cyp51A, cyp51B and cyp51C, that plays a critical role in the third module of ergosterol biosynthesis pathway, being ergosterol the major sterol component in fungal membranes that participates in a variety of functions. The third module or late pathway involves the ergosterol synthesis itself through consecutive reactions that mainly occur in the endoplasmic reticulum (ER) membrane. In filamentous fungi, during the initial step of this module, lanosterol (lanosta-8,24-dien-3beta-ol) can be metabolized to eburicol. Sterol 14alpha-demethylase catalyzes the three-step oxidative removal of the 14alpha-methyl group (C-32) of both these sterols in the form of formate, and converts eburicol and lanosterol to 14-demethyleburicol (4,4,24-trimethylergosta-8,14,24(28)-trienol) and 4,4-dimethyl-5alpha-cholesta-8,14,24-trien-3beta-ol, respectively, which are further metabolized by other enzymes in the pathway to ergosterol. Can also use substrates not intrinsic to fungi, such as 24,25-dihydrolanosterol (DHL), producing 4,4'-dimethyl-8,14-cholestadien-3-beta-ol, but at lower rates than the endogenous substrates. Functionally, as a target of azole drugs, plays a crucial role in azole drug susceptibility. The protein is Sterol 14-alpha demethylase of Aspergillus flavus (strain ATCC 200026 / FGSC A1120 / IAM 13836 / NRRL 3357 / JCM 12722 / SRRC 167).